We begin with the raw amino-acid sequence, 137 residues long: Small ribosomal subunit protein uS19 (137 aa).

This sequence belongs to the universal ribosomal protein uS19 family.

Functionally, protein S19 forms a complex with S13 that binds strongly to the 16S ribosomal RNA. This chain is Small ribosomal subunit protein uS19, found in Methanoculleus marisnigri (strain ATCC 35101 / DSM 1498 / JR1).